The sequence spans 126 residues: Small ribosomal subunit protein uS12m (126 aa).

The segment covering 1 to 11 (MATSNQMGANT) has biased composition (polar residues). The interval 1–21 (MATSNQMGANTRSKKKKKNLK) is disordered. The span at 12 to 21 (RSKKKKKNLK) shows a compositional bias: basic residues.

Belongs to the universal ribosomal protein uS12 family.

It localises to the mitochondrion. Functionally, protein S12 is involved in the translation initiation step. The sequence is that of Small ribosomal subunit protein uS12m (RPS12) from Bigelowiella natans (Pedinomonas minutissima).